The following is a 354-amino-acid chain: 3-dehydroquinate synthase (354 aa).

NAD(+)-binding positions include 66–71 (DGERYK), 100–104 (GVVGD), 124–125 (TT), Lys137, and Lys146. Glu179, His242, and His259 together coordinate Zn(2+).

The protein belongs to the sugar phosphate cyclases superfamily. Dehydroquinate synthase family. Co(2+) is required as a cofactor. Zn(2+) serves as cofactor. Requires NAD(+) as cofactor.

It localises to the cytoplasm. The catalysed reaction is 7-phospho-2-dehydro-3-deoxy-D-arabino-heptonate = 3-dehydroquinate + phosphate. It participates in metabolic intermediate biosynthesis; chorismate biosynthesis; chorismate from D-erythrose 4-phosphate and phosphoenolpyruvate: step 2/7. Catalyzes the conversion of 3-deoxy-D-arabino-heptulosonate 7-phosphate (DAHP) to dehydroquinate (DHQ). This Halorhodospira halophila (strain DSM 244 / SL1) (Ectothiorhodospira halophila (strain DSM 244 / SL1)) protein is 3-dehydroquinate synthase.